Consider the following 188-residue polypeptide: Segregation and condensation protein B (188 aa).

It belongs to the ScpB family. As to quaternary structure, homodimer. Homodimerization may be required to stabilize the binding of ScpA to the Smc head domains. Component of a cohesin-like complex composed of ScpA, ScpB and the Smc homodimer, in which ScpA and ScpB bind to the head domain of Smc. The presence of the three proteins is required for the association of the complex with DNA.

It is found in the cytoplasm. Participates in chromosomal partition during cell division. May act via the formation of a condensin-like complex containing Smc and ScpA that pull DNA away from mid-cell into both cell halves. The polypeptide is Segregation and condensation protein B (Streptococcus gordonii (strain Challis / ATCC 35105 / BCRC 15272 / CH1 / DL1 / V288)).